A 263-amino-acid chain; its full sequence is Aquaporin-8 (263 aa).

Topologically, residues 1–38 (MSGEQTPMCSMDLREIKGKETNMADSYHGMSWYEQYIQ) are cytoplasmic. The helical transmembrane segment at 39–59 (PCVVELLGSALFIFIGCLSVI) threads the bilayer. Cys55 is subject to Cysteine persulfide. Residue Cys55 is modified to Cysteine sulfenic acid (-SOH). Residues 60-86 (ENSPNTGLLQPALAHGLALGLIIATLG) lie on the Extracellular side of the membrane. A helical transmembrane segment spans residues 87-107 (NISGGHFNPAVSLAVTLVGGL). The short motif at 94 to 96 (NPA) is the NPA 1 element. Over 108-109 (KT) the chain is Cytoplasmic. The chain crosses the membrane as a helical span at residues 110–130 (MLLIPYWVSQLFGGMIGAALA). Residues 131–158 (KVVSPEERFWNASGAAFAIVQEQEQVAE) lie on the Extracellular side of the membrane. Asn141 carries N-linked (GlcNAc...) asparagine glycosylation. A helical transmembrane segment spans residues 159-179 (ALGVEIVMTMLLVLAVCMGAV). At 180-185 (NEKTMG) the chain is on the cytoplasmic side. The chain crosses the membrane as a helical span at residues 186–206 (PLAPFSIGFSVIVDILAGGGI). Over 207–230 (SGACMNPARAFGPAVMAGYWDFHW) the chain is Extracellular. The NPA 2 signature appears at 212–214 (NPA). The chain crosses the membrane as a helical span at residues 231-251 (IYWLGPLLAGLFVGLLIRLFI). The Cytoplasmic portion of the chain corresponds to 252–263 (GDEKTRLILKSR).

The protein belongs to the MIP/aquaporin (TC 1.A.8) family. N-glycosylated. Post-translationally, sulfenylation at Cys-55(C55-SOH) when hydrogen peroxide flows through the AQP8 channel, making it susceptible to hydrogen sulfide produced by CBS. In terms of processing, persulfidation at Cys-55 is required to gate AQP8 channel; under stress condition, hydrogen peroxide accumulates in the cell leading to CBS activation that produces hydrogen sulfide inducing persulfidation of oxidized Cys-55 (C55-SOH). In terms of tissue distribution, highly expressed in sperm, pancreas and liver. Expressed in hepatocytes, acinal cells of pancreas and salivary gland, and absorptive colonic epithelial cells. Expressed in the myoepithelium of submandibular and parotid glands. Expressed in pancreatic beta-cells. Expressed in testis but not in epididymis. Expressed in small intestine.

It localises to the cell membrane. It is found in the mitochondrion inner membrane. The protein resides in the apical cell membrane. The protein localises to the basolateral cell membrane. Its subcellular location is the smooth endoplasmic reticulum membrane. It catalyses the reaction H2O(in) = H2O(out). It carries out the reaction NH4(+)(in) = NH4(+)(out). The catalysed reaction is H2O2(out) = H2O2(in). The enzyme catalyses formamide(out) = formamide(in). It catalyses the reaction methylamine(out) = methylamine(in). With respect to regulation, reversibly gated by a two-step sulfenylation-persulfidation process in cells undergoing diverse stresses. Channel that allows the facilitated permeation of water and uncharged molecules, such as hydrogen peroxide and the neutral form of ammonia (NH3), through cellular membranes such as plasma membrane, inner mitochondrial membrane and endoplasmic reticulum membrane of several tissues. The transport of ammonia neutral form induces a parallel transport of proton, at alkaline pH when the concentration of ammonia is high. However, it is unclear whether the transport of proton takes place via the aquaporin or via an endogenous pathway. Also, may transport ammonia analogs such as formamide and methylamine, a transport favourited at basic pH due to the increase of unprotonated (neutral) form, which is expected to favor diffusion. Does not transport urea or glycerol. The water transport mechanism is mercury- and copper-sensitive and passive in response to osmotic driving forces. At the canicular plasma membrane, mediates the osmotic transport of water toward the bile canaliculus and facilitates the cAMP-induced bile canalicular water secretion, a process involved in bile formation. In addition, mediates the hydrogen peroxide release from hepatocyte mitochondria that modulates the SREBF2-mediated cholesterol synthesis and facilitates the mitochondrial ammonia uptake which is metabolized into urea, mainly under glucagon stimulation. In B cells, transports the CYBB-generated hydrogen peroxide from the external leaflet of the plasma membrane to the cytosol to promote B cell activation and differentiation for signal amplification. In the small intestine and colon system, mediates water transport through mitochondria and apical membrane of epithelial cells. May play an important role in the adaptive response of proximal tubule cells to acidosis possibly facilitating mitochondrial ammonia transport. This chain is Aquaporin-8, found in Rattus norvegicus (Rat).